We begin with the raw amino-acid sequence, 191 residues long: Threonylcarbamoyl-AMP synthase (191 aa).

Residues Val-10–Ala-191 enclose the YrdC-like domain.

Belongs to the SUA5 family. TsaC subfamily.

Its subcellular location is the cytoplasm. The enzyme catalyses L-threonine + hydrogencarbonate + ATP = L-threonylcarbamoyladenylate + diphosphate + H2O. In terms of biological role, required for the formation of a threonylcarbamoyl group on adenosine at position 37 (t(6)A37) in tRNAs that read codons beginning with adenine. Catalyzes the conversion of L-threonine, HCO(3)(-)/CO(2) and ATP to give threonylcarbamoyl-AMP (TC-AMP) as the acyladenylate intermediate, with the release of diphosphate. In Saccharophagus degradans (strain 2-40 / ATCC 43961 / DSM 17024), this protein is Threonylcarbamoyl-AMP synthase.